Reading from the N-terminus, the 500-residue chain is Cytochrome P450 71B37 (500 aa).

A helical membrane pass occupies residues 2-22 (ATIWFLPLLFLSCLLLAALRL). Heme is bound at residue Cys-440.

The protein belongs to the cytochrome P450 family. Requires heme as cofactor.

The protein localises to the membrane. The polypeptide is Cytochrome P450 71B37 (CYP71B37) (Arabidopsis thaliana (Mouse-ear cress)).